A 906-amino-acid chain; its full sequence is Formin-like protein 18 (906 aa).

A signal peptide spans 1–25 (MSKLRWLIMAFLVCLLLLTPKDLEG). Residues 120 to 140 (MVVVGLSAACVALVTLVGICF) traverse the membrane as a helical segment. Disordered regions lie at residues 267–416 (AGGG…QADP) and 854–906 (NAKA…DSDD). The segment covering 274–292 (AAPPPPAGPPPPAPPPLPP) has biased composition (pro residues). The segment covering 293-303 (SHHHHHGHHPP) has biased composition (basic residues). Composition is skewed to pro residues over residues 320–339 (APPPPPAHPAAPAPPPPAPS), 348–375 (GPPPPPPPAAPAAPRPPGPGPGPPPPPG), and 383–402 (GPPPPALPGGPRARGPPPFK). 2 stretches are compositionally biased toward low complexity: residues 403–416 (KSPGAAAAAAQADP) and 854–877 (NAKAKKQQQPTPAPRSRQSSQSSF). The region spanning 411–866 (AAQADPNKAK…AKKQQQPTPA (456 aa)) is the FH2 domain. Over residues 878 to 889 (RDPRQQIQDRRA) the composition is skewed to basic and acidic residues. Low complexity predominate over residues 897-906 (SSSSSSDSDD).

The protein belongs to the formin-like family. Class-I subfamily.

It localises to the membrane. The chain is Formin-like protein 18 (FH18) from Oryza sativa subsp. japonica (Rice).